The sequence spans 327 residues: Aldo-keto reductase FVEG_12638 (327 aa).

Asp51 is an NADP(+) binding site. Tyr56 serves as the catalytic Proton donor. His122 is a substrate binding site. Residues 152 to 153, 202 to 212, and 286 to 294 each bind NADP(+); these read SE, GPLGHGWLVED, and ENFTSRDIE.

Belongs to the aldo/keto reductase family. Aldo/keto reductase 2 subfamily.

Functionally, aldo-keto reductase; part of the Fusarium detoxification of benzoxazolinone cluster 2 (FDB2) involved in the degradation of benzoxazolinones produced by the host plant. Maize, wheat, and rye produce the 2 benzoxazinone phytoanticipins 2,4-dihy-droxy-7-methoxy-1,4-benzoxazin-3-one (DIMBOA) and 2,4-dihydroxy-1,4-benzoxazin-3-one (DIBOA) that, due to their inherent instability once released, spontaneously degrade to the more stable corresponding benzoxazolinones, 6-methoxy-2-benzoxazolinone (MBOA) and 2-benzoxazolinone (BOA), respectively. The first step in the detoxification of benzoxazolinones involves the hydrolysis of the cyclic ester bond of benzoxazolinones by the FDB1 cluster gamma-lactamase MBL1 to aminophenols. MBL1 is able to convert BOA into 2-aminophenol (2-AP), as well as MBOA into 5-methoxy-2-aminophenol (2-AMP). The FDB2 cluster N-malonyltransferase FDB2/NAT1 then metabolizes aminophenols via N-malonylation to non-toxic malonamic acids. FDB2/NAT1 converts 2-AP into N-(2-hydroxyphenyl) malonamic acid (HPMA) and 2-AMP into N-(2-hydroxy-4-methoxyphenyl) malonamic acid (HMPMA). The duplicated dienlactone hydrolases DLH1 and DLH2 may provide redundant function for hydrolyzing the lactone moiety in the BOA molecule. The roles of the amidases an other enzymes encoded by the 2 FDB clusters have not been identified so far. The sequence is that of Aldo-keto reductase FVEG_12638 from Gibberella moniliformis (strain M3125 / FGSC 7600) (Maize ear and stalk rot fungus).